The chain runs to 199 residues: Thymidine kinase (199 aa).

Residues 23 to 30 (GSMFSGKT) and 95 to 98 (DEAQ) contribute to the ATP site. Residue glutamate 96 is the Proton acceptor of the active site. Residues cysteine 152, cysteine 155, cysteine 184, and cysteine 187 each coordinate Zn(2+).

It belongs to the thymidine kinase family. Homotetramer.

The protein localises to the cytoplasm. It catalyses the reaction thymidine + ATP = dTMP + ADP + H(+). The sequence is that of Thymidine kinase from Bacteroides thetaiotaomicron (strain ATCC 29148 / DSM 2079 / JCM 5827 / CCUG 10774 / NCTC 10582 / VPI-5482 / E50).